Here is a 60-residue protein sequence, read N- to C-terminus: Large ribosomal subunit protein uL30 (60 aa).

It belongs to the universal ribosomal protein uL30 family. As to quaternary structure, part of the 50S ribosomal subunit.

The protein is Large ribosomal subunit protein uL30 of Desulfitobacterium hafniense (strain DSM 10664 / DCB-2).